Here is a 457-residue protein sequence, read N- to C-terminus: Protein trichome birefringence-like 4 (457 aa).

A helical; Signal-anchor for type II membrane protein transmembrane segment spans residues 19–37 (IFLTSLFFLSLFLLSSSSL). A GDS motif motif is present at residues 173–175 (GDS). The DCXHWCLPGXXDXWN motif signature appears at 420 to 434 (DCSHWCLPGVPDSWN).

The protein belongs to the PC-esterase family. TBL subfamily.

It is found in the membrane. Functionally, may act as a bridging protein that binds pectin and other cell wall polysaccharides. Probably involved in maintaining esterification of pectins. May be involved in the specific O-acetylation of cell wall polymers. The polypeptide is Protein trichome birefringence-like 4 (TBL4) (Arabidopsis thaliana (Mouse-ear cress)).